We begin with the raw amino-acid sequence, 107 residues long: DNA-directed RNA polymerase subunit omega (107 aa).

It belongs to the RNA polymerase subunit omega family. As to quaternary structure, the RNAP catalytic core consists of 2 alpha, 1 beta, 1 beta' and 1 omega subunit. When a sigma factor is associated with the core the holoenzyme is formed, which can initiate transcription.

The enzyme catalyses RNA(n) + a ribonucleoside 5'-triphosphate = RNA(n+1) + diphosphate. Promotes RNA polymerase assembly. Latches the N- and C-terminal regions of the beta' subunit thereby facilitating its interaction with the beta and alpha subunits. The chain is DNA-directed RNA polymerase subunit omega from Mycolicibacterium smegmatis (strain ATCC 700084 / mc(2)155) (Mycobacterium smegmatis).